Reading from the N-terminus, the 342-residue chain is Putative anthocyanidin reductase (342 aa).

NADP(+) is bound by residues Arg-44, Lys-51, 71-72 (EL), 91-93 (VAT), Tyr-172, Lys-176, 199-202 (PVLV), and Ser-214. Residue Lys-176 is the Proton donor of the active site.

This sequence belongs to the NAD(P)-dependent epimerase/dehydratase family. Dihydroflavonol-4-reductase subfamily. Highly expressed in leaves and weakly in stems. Not expressed in roots.

Its pathway is secondary metabolite biosynthesis; flavonoid biosynthesis. The protein is Putative anthocyanidin reductase of Ginkgo biloba (Ginkgo).